Consider the following 597-residue polypeptide: Nuclear receptor subfamily 4 group A member 1 (597 aa).

Positions 1–22 are disordered; the sequence is MPCIQAQYGTPATSPGPRDHLT. Positions 170–465 are required for nuclear import; the sequence is RVWTEQLPKA…PGEGKLIFCS (296 aa). Residues 263–338 constitute a DNA-binding region (nuclear receptor); the sequence is EGRCAVCGDN…VGMVKEVVRT (76 aa). 2 NR C4-type zinc fingers span residues 266–286 and 302–326; these read CAVC…CEGC and CLAN…FQKC. A required for binding NBRE-containing DNA region spans residues 267–353; sequence AVCGDNASCQ…RRGRLPSKPK (87 aa). Residues 298–360 form a required for the interaction with RXRA region; that stretch reads AKYICLANKD…KPKQPPDASP (63 aa). Ser340 bears the Phosphoserine; by PKA mark. Positions 341 to 360 are disordered; that stretch reads LKGRRGRLPSKPKQPPDASP. A Phosphoserine; by PKA, RPS6KA1 and RPS6KA3 modification is found at Ser350. The 236-residue stretch at 359–594 folds into the NR LBD domain; sequence SPTNLLTSLI…PIVDKIFMDT (236 aa). Residues 520–543 are binds lipopolysaccharide; the sequence is PRRVEELQNRIASCLKEHMAAVAG. The interval 583 to 594 is AF-2; that stretch reads PPPIVDKIFMDT.

This sequence belongs to the nuclear hormone receptor family. NR4 subfamily. As to quaternary structure, binds the NGFI-B response element (NBRE) as a monomer. Binds the Nur response element (NurRE), consisting of two inverse NBRE-related octanucleotide repeats separated by 6 base-pairs, as a dimer. Interacts (via N-terminus) with NLRP3 (via LRR repeat domain); the interaction is direct, requires binding of NR4A1/Nur77 to NBRE-containing dsDNA and lipopolysaccharide, and leads to non-canonical NLRP3 inflammasome activation. Interacts with GADD45GIP1. Interacts with STK11. Interacts with IFI27. Heterodimer (via DNA-binding domain) with RXRA (via C-terminus); DNA-binding of the heterodimer is enhanced by 9-cis retinoic acid. Competes for the RXRA interaction with EP300 and thereby attenuates EP300 mediated acetylation of RXRA. Interacts with NCOA1. Interacts with NCOA2. Interacts with NCOA3. Zn(2+) serves as cofactor. Phosphorylated at Ser-350 by RPS6KA1 and RPS6KA3 in response to mitogenic or stress stimuli. Phosphorylation of Ser-350 results in decrease in NBRE binding while phosphorylation of Ser-340 has little effect on it. Post-translationally, acetylated by p300/CBP, acetylation increases stability. Deacetylated by HDAC1. In terms of tissue distribution, expressed in lung, brain and superior cervical ganglia. High levels are seen in the adrenal tissue.

Its subcellular location is the nucleus. The protein resides in the cytoplasm. The protein localises to the cytosol. It is found in the mitochondrion. In terms of biological role, orphan nuclear receptor. Binds the NGFI-B response element (NBRE) 5'-AAAGGTCA-3'. Binds 9-cis-retinoic acid outside of its ligand-binding (NR LBD) domain. Participates in energy homeostasis by sequestrating the kinase STK11 in the nucleus, thereby attenuating cytoplasmic AMPK activation. Regulates the inflammatory response in macrophages by regulating metabolic adaptations during inflammation, including repressing the transcription of genes involved in the citric acid cycle (TCA). Inhibits NF-kappa-B signaling by binding to low-affinity NF-kappa-B binding sites, such as at the IL2 promoter. May act concomitantly with NR4A2 in regulating the expression of delayed-early genes during liver regeneration. Plays a role in the vascular response to injury. Its function is as follows. In the cytosol, upon its detection of both bacterial lipopolysaccharide (LPS) and NBRE-containing mitochondrial DNA released by GSDMD pores during pyroptosis, it promotes non-canonical NLRP3 inflammasome activation by stimulating association of NLRP3 and NEK7. In Rattus norvegicus (Rat), this protein is Nuclear receptor subfamily 4 group A member 1 (Nr4a1).